Reading from the N-terminus, the 779-residue chain is Membrane metallo-endopeptidase-like 1 (779 aa).

Over Met1–Gly27 the chain is Cytoplasmic. The helical; Signal-anchor for type II membrane protein transmembrane segment at Gly28–Ala48 threads the bilayer. The Lumenal segment spans residues Asp49–Trp779. The region spanning Val88–Trp779 is the Peptidase M13 domain. 5 cysteine pairs are disulfide-bonded: Cys89-Cys94, Cys112-Cys764, Cys120-Cys724, Cys175-Cys439, and Cys650-Cys776. Residue Arg135 participates in a peptide binding. 4 N-linked (GlcNAc...) asparagine glycosylation sites follow: Asn177, Asn207, Asn350, and Asn530. The stretch at Leu515 to Asp560 forms a coiled coil. His613 is a Zn(2+) binding site. Residue Glu614 is part of the active site. His617 provides a ligand contact to Zn(2+). The N-linked (GlcNAc...) asparagine glycan is linked to Asn657. Glu676 contributes to the Zn(2+) binding site. Asp680 (proton donor) is an active-site residue.

This sequence belongs to the peptidase M13 family. It depends on Zn(2+) as a cofactor. Post-translationally, N-glycosylated. As to expression, predominantly expressed in testis. Weakly expressed in brain, kidney and heart.

Its subcellular location is the membrane. It is found in the secreted. It carries out the reaction Preferential cleavage of polypeptides between hydrophobic residues, particularly with Phe or Tyr at P1'.. With respect to regulation, inhibited by thiorphan and phosphoramidon. Its function is as follows. Metalloprotease involved in sperm function, possibly by modulating the processes of fertilization and early embryonic development. Degrades a broad variety of small peptides with a preference for peptides shorter than 3 kDa containing neutral bulky aliphatic or aromatic amino acid residues. Shares the same substrate specificity with MME and cleaves peptides at the same amide bond. This is Membrane metallo-endopeptidase-like 1 (MMEL1) from Homo sapiens (Human).